The following is a 225-amino-acid chain: UPF0758 protein Swoo_4561 (225 aa).

Residues 102-224 (ILSDPDLTRD…IVSFAERGWI (123 aa)) form the MPN domain. His-173, His-175, and Asp-186 together coordinate Zn(2+). A JAMM motif motif is present at residues 173–186 (HNHPSGVAEPSHAD).

The protein belongs to the UPF0758 family.

The polypeptide is UPF0758 protein Swoo_4561 (Shewanella woodyi (strain ATCC 51908 / MS32)).